The primary structure comprises 272 residues: Tryptophan synthase alpha chain (272 aa).

Residues E53 and D64 each act as proton acceptor in the active site.

Belongs to the TrpA family. As to quaternary structure, tetramer of two alpha and two beta chains.

The enzyme catalyses (1S,2R)-1-C-(indol-3-yl)glycerol 3-phosphate + L-serine = D-glyceraldehyde 3-phosphate + L-tryptophan + H2O. Its pathway is amino-acid biosynthesis; L-tryptophan biosynthesis; L-tryptophan from chorismate: step 5/5. Functionally, the alpha subunit is responsible for the aldol cleavage of indoleglycerol phosphate to indole and glyceraldehyde 3-phosphate. This chain is Tryptophan synthase alpha chain, found in Xanthomonas campestris pv. campestris (strain 8004).